The sequence spans 344 residues: Sensor histidine kinase GraS (344 aa).

The next 2 helical transmembrane spans lie at 18–38 and 43–63; these read IFWI…DYDI and IGFI…FTFL. The 207-residue stretch at 126–332 folds into the Histidine kinase domain; sequence EFVHDIKTPV…TFVLTFPKQN (207 aa). Residue histidine 129 is modified to Phosphohistidine; by autocatalysis.

In terms of processing, autophosphorylated.

It localises to the cell membrane. The catalysed reaction is ATP + protein L-histidine = ADP + protein N-phospho-L-histidine.. In terms of biological role, member of the two-component regulatory system GraR/GraS involved in resistance against cationic antimicrobial peptides (CAMPs). GraS probably functions as a sensor protein kinase which is autophosphorylated at a histidine residue and transfers its phosphate group to GraR. In Staphylococcus haemolyticus (strain JCSC1435), this protein is Sensor histidine kinase GraS (graS).